A 214-amino-acid chain; its full sequence is Small ribosomal subunit protein uS5 (214 aa).

Residues 54–117 (LKYEVVDIKV…RDAKMNIIPV (64 aa)) enclose the S5 DRBM domain.

The protein belongs to the universal ribosomal protein uS5 family. As to quaternary structure, part of the 30S ribosomal subunit. Contacts protein S4.

With S4 and S12 plays an important role in translational accuracy. This chain is Small ribosomal subunit protein uS5, found in Saccharolobus solfataricus (strain ATCC 35092 / DSM 1617 / JCM 11322 / P2) (Sulfolobus solfataricus).